A 336-amino-acid chain; its full sequence is MTRVFSGVKPTGHLTLGNYLGAMRRWAAVDQHRSDALFCVVDLHALTVDHDPARVRRLSRQAASLLLAAGLDPELCTVFVQSHVDEHARLSYVLECVATDGEMRRMIQYKEKAARERVRGGSVRLSLLTYPVLMAADILAYGTDEVPVGEDQTQHVELARDLAVRFNQRYGHTFVVPRATSPAVAARVMNLQEPASKMGKSDDTGPGIVYLLDEPDVVRKKVMRAVTDSGRDVVYDPEERAGLANLLEILAACTDGEPAELAGGYDSYGALKKDTAEAVVEMLRPVRERHMELSADPGYVDGVLREGAEKARAMARPTVDDAYRAIGLLPPVNAAR.

ATP-binding positions include 9-11 and 17-18; these read KPT and GN. Positions 10–18 match the 'HIGH' region motif; it reads PTGHLTLGN. Asp-137 is a binding site for L-tryptophan. Residues 149 to 151, Val-188, and 197 to 201 each bind ATP; these read GED and KMGKS. The 'KMSKS' region motif lies at 197–201; that stretch reads KMGKS.

The protein belongs to the class-I aminoacyl-tRNA synthetase family. Homodimer.

The protein localises to the cytoplasm. It carries out the reaction tRNA(Trp) + L-tryptophan + ATP = L-tryptophyl-tRNA(Trp) + AMP + diphosphate + H(+). Functionally, catalyzes the attachment of tryptophan to tRNA(Trp). The sequence is that of Tryptophan--tRNA ligase 1 from Streptomyces coelicolor (strain ATCC BAA-471 / A3(2) / M145).